The primary structure comprises 61 residues: Small ribosomal subunit protein uS14 (61 aa).

Positions 24, 27, 40, and 43 each coordinate Zn(2+).

Belongs to the universal ribosomal protein uS14 family. Zinc-binding uS14 subfamily. As to quaternary structure, part of the 30S ribosomal subunit. Contacts proteins S3 and S10. The cofactor is Zn(2+).

In terms of biological role, binds 16S rRNA, required for the assembly of 30S particles and may also be responsible for determining the conformation of the 16S rRNA at the A site. The protein is Small ribosomal subunit protein uS14 of Leptospira borgpetersenii serovar Hardjo-bovis (strain JB197).